Consider the following 621-residue polypeptide: Chaperone protein HscA homolog (621 aa).

The protein belongs to the heat shock protein 70 family.

In terms of biological role, chaperone involved in the maturation of iron-sulfur cluster-containing proteins. Has a low intrinsic ATPase activity which is markedly stimulated by HscB. The polypeptide is Chaperone protein HscA homolog (Ralstonia nicotianae (strain ATCC BAA-1114 / GMI1000) (Ralstonia solanacearum)).